The following is a 426-amino-acid chain: Enolase (426 aa).

Gln-162 provides a ligand contact to (2R)-2-phosphoglycerate. Residue Glu-204 is the Proton donor of the active site. Mg(2+) is bound by residues Asp-241, Glu-284, and Asp-311. (2R)-2-phosphoglycerate contacts are provided by Lys-336, Arg-365, Ser-366, and Lys-387. The active-site Proton acceptor is the Lys-336.

It belongs to the enolase family. In terms of assembly, component of the RNA degradosome, a multiprotein complex involved in RNA processing and mRNA degradation. The cofactor is Mg(2+).

The protein localises to the cytoplasm. It is found in the secreted. It localises to the cell surface. It carries out the reaction (2R)-2-phosphoglycerate = phosphoenolpyruvate + H2O. The protein operates within carbohydrate degradation; glycolysis; pyruvate from D-glyceraldehyde 3-phosphate: step 4/5. In terms of biological role, catalyzes the reversible conversion of 2-phosphoglycerate (2-PG) into phosphoenolpyruvate (PEP). It is essential for the degradation of carbohydrates via glycolysis. The chain is Enolase from Thioalkalivibrio sulfidiphilus (strain HL-EbGR7).